Consider the following 90-residue polypeptide: Acylphosphatase (90 aa).

The region spanning 3-90 (RVLIKLTGKV…DIYLDFSIVR (88 aa)) is the Acylphosphatase-like domain. Residues Arg-18 and Asn-36 contribute to the active site.

The protein belongs to the acylphosphatase family.

It carries out the reaction an acyl phosphate + H2O = a carboxylate + phosphate + H(+). The chain is Acylphosphatase (acyP) from Shewanella oneidensis (strain ATCC 700550 / JCM 31522 / CIP 106686 / LMG 19005 / NCIMB 14063 / MR-1).